The chain runs to 913 residues: DNA polymerase (913 aa).

The interval 182 to 401 (PLIIASWDIE…AYARKDTDLP (220 aa)) is contains conserved residues essential for 3' -&gt; 5' exonuclease activities.

This sequence belongs to the DNA polymerase type-B family.

It carries out the reaction DNA(n) + a 2'-deoxyribonucleoside 5'-triphosphate = DNA(n+1) + diphosphate. Functionally, in addition to polymerase activity, this DNA polymerase potentially exhibits 3' to 5' exonuclease activity. This chain is DNA polymerase (DPO), found in Chlorella (PBCV-NY2A).